We begin with the raw amino-acid sequence, 575 residues long: Inactive terpenoid synthase 20, chloroplastic (575 aa).

The transit peptide at 1 to 52 (MEAITKNGSLSQTLVHCGPKSLSSFIPVRCLRFSKNPFPKKLVVTRARTSIN) directs the protein to the chloroplast. Aspartate 332, aspartate 336, aspartate 474, threonine 478, and glutamate 482 together coordinate Mg(2+). Positions 332 to 336 (DDLYD) match the DDXXD motif motif.

This sequence belongs to the terpene synthase family. Tpsa subfamily. Predominantly expressed in roots but also in leaves and stems.

The protein localises to the plastid. It is found in the chloroplast. In terms of biological role, does not possess diterpene synthase activity. The protein is Inactive terpenoid synthase 20, chloroplastic of Arabidopsis thaliana (Mouse-ear cress).